The chain runs to 426 residues: Eukaryotic translation initiation factor 3 subunit M (426 aa).

In terms of domain architecture, PCI spans 179–350; the sequence is DDEDSYRYLI…KVFLVHRTTY (172 aa). Over residues 385–401 the composition is skewed to basic and acidic residues; the sequence is DVEGQREREQQELERKL. The interval 385–426 is disordered; the sequence is DVEGQREREQQELERKLAGAGMGGGPGGDRRRQQKPRTDEDD.

The protein belongs to the eIF-3 subunit M family. As to quaternary structure, component of the eukaryotic translation initiation factor 3 (eIF-3) complex.

It localises to the cytoplasm. In terms of biological role, component of the eukaryotic translation initiation factor 3 (eIF-3) complex, which is involved in protein synthesis of a specialized repertoire of mRNAs and, together with other initiation factors, stimulates binding of mRNA and methionyl-tRNAi to the 40S ribosome. The eIF-3 complex specifically targets and initiates translation of a subset of mRNAs involved in cell proliferation. This Chaetomium globosum (strain ATCC 6205 / CBS 148.51 / DSM 1962 / NBRC 6347 / NRRL 1970) (Soil fungus) protein is Eukaryotic translation initiation factor 3 subunit M.